We begin with the raw amino-acid sequence, 446 residues long: Cyclin-T1-1 (446 aa).

Belongs to the cyclin family. Cyclin T subfamily.

In Oryza sativa subsp. japonica (Rice), this protein is Cyclin-T1-1 (CYCT1-1).